We begin with the raw amino-acid sequence, 352 residues long: Heat-inducible transcription repressor HrcA (352 aa).

Belongs to the HrcA family.

Negative regulator of class I heat shock genes (grpE-dnaK-dnaJ and groELS operons). Prevents heat-shock induction of these operons. This is Heat-inducible transcription repressor HrcA from Chlorobium phaeobacteroides (strain BS1).